The chain runs to 221 residues: Probable septum site-determining protein MinC (221 aa).

Belongs to the MinC family. In terms of assembly, interacts with MinD and FtsZ.

Functionally, cell division inhibitor that blocks the formation of polar Z ring septums. Rapidly oscillates between the poles of the cell to destabilize FtsZ filaments that have formed before they mature into polar Z rings. Prevents FtsZ polymerization. The chain is Probable septum site-determining protein MinC from Prochlorococcus marinus (strain SARG / CCMP1375 / SS120).